Here is a 485-residue protein sequence, read N- to C-terminus: Cysteine--tRNA ligase (485 aa).

Cysteine 27 lines the Zn(2+) pocket. Positions 29–39 (ITAYDLCHLGH) match the 'HIGH' region motif. Residues cysteine 208, histidine 233, and glutamate 237 each contribute to the Zn(2+) site. The short motif at 265–269 (KMSKS) is the 'KMSKS' region element. Lysine 268 contributes to the ATP binding site.

The protein belongs to the class-I aminoacyl-tRNA synthetase family. Monomer. Requires Zn(2+) as cofactor.

The protein resides in the cytoplasm. The catalysed reaction is tRNA(Cys) + L-cysteine + ATP = L-cysteinyl-tRNA(Cys) + AMP + diphosphate. This Oleidesulfovibrio alaskensis (strain ATCC BAA-1058 / DSM 17464 / G20) (Desulfovibrio alaskensis) protein is Cysteine--tRNA ligase.